Consider the following 328-residue polypeptide: MIRNPNYTDFVCCAVCNKIIPPAPFGETFKRIYDYKPFKTRFYTHKDILDIGASILNKEEEFRETVFKEQIKKAEAKVWEKAELLQKQAVDQAVEDAEARHKFEIRVLEEQHQKDLKALEDKTKVNMIQQMKEELNREHTAAEQRMVHRIQRIMMECHQEKMEAVKKAREEERRIAQKAIEEEKSKVLEEFVTTGVTVIKDKKTSLGQLIKAKEHEMTIYYGMAQRQKQEEVQEVLQEAEKTHQATLDNMMGKLVNTQGELLSVAKQLGIMTNWKDFLEEELQETRAAFQKYINYTFPRLSPGHADFILPERKKTPSILAKENEPRTD.

Coiled-coil stretches lie at residues 67–190 and 223–251; these read FKEQ…VLEE and MAQR…DNMM.

This is an uncharacterized protein from Mus musculus (Mouse).